The following is a 259-amino-acid chain: Deoxyribose-phosphate aldolase (259 aa).

Catalysis depends on Asp102, which acts as the Proton donor/acceptor. Catalysis depends on Lys167, which acts as the Schiff-base intermediate with acetaldehyde. Lys201 (proton donor/acceptor) is an active-site residue.

The protein belongs to the DeoC/FbaB aldolase family. DeoC type 2 subfamily.

Its subcellular location is the cytoplasm. The enzyme catalyses 2-deoxy-D-ribose 5-phosphate = D-glyceraldehyde 3-phosphate + acetaldehyde. Its pathway is carbohydrate degradation; 2-deoxy-D-ribose 1-phosphate degradation; D-glyceraldehyde 3-phosphate and acetaldehyde from 2-deoxy-alpha-D-ribose 1-phosphate: step 2/2. In terms of biological role, catalyzes a reversible aldol reaction between acetaldehyde and D-glyceraldehyde 3-phosphate to generate 2-deoxy-D-ribose 5-phosphate. This chain is Deoxyribose-phosphate aldolase, found in Serratia proteamaculans (strain 568).